A 222-amino-acid chain; its full sequence is Pleckstrin homology domain-containing family B member 2 (222 aa).

The 108-residue stretch at 2-109 folds into the PH domain; that stretch reads AFVKSGWLLR…WKFTLQDSRT (108 aa). Position 20 (lysine 20) interacts with a 1,2-diacyl-sn-glycero-3-phospho-L-serine.

The protein resides in the recycling endosome membrane. In terms of biological role, involved in retrograde transport of recycling endosomes. The sequence is that of Pleckstrin homology domain-containing family B member 2 (PLEKHB2) from Homo sapiens (Human).